The primary structure comprises 891 residues: Aconitate hydratase A (891 aa).

The [4Fe-4S] cluster site is built by Cys435, Cys501, and Cys504.

Belongs to the aconitase/IPM isomerase family. As to quaternary structure, monomer. It depends on [4Fe-4S] cluster as a cofactor.

It catalyses the reaction citrate = D-threo-isocitrate. The catalysed reaction is (2S,3R)-3-hydroxybutane-1,2,3-tricarboxylate = 2-methyl-cis-aconitate + H2O. Its pathway is carbohydrate metabolism; tricarboxylic acid cycle; isocitrate from oxaloacetate: step 2/2. It participates in organic acid metabolism; propanoate degradation. In terms of biological role, involved in the catabolism of short chain fatty acids (SCFA) via the tricarboxylic acid (TCA)(acetyl degradation route) and probably the 2-methylcitrate cycle I (propionate degradation route). Catalyzes the reversible isomerization of citrate to isocitrate via cis-aconitate. The apo form of AcnA functions as a RNA-binding regulatory protein. Could catalyze the hydration of 2-methyl-cis-aconitate to yield (2R,3S)-2-methylisocitrate. The polypeptide is Aconitate hydratase A (acn) (Legionella pneumophila subsp. pneumophila (strain Philadelphia 1 / ATCC 33152 / DSM 7513)).